Here is a 345-residue protein sequence, read N- to C-terminus: Dihydroorotase (345 aa).

Residues histidine 13 and histidine 15 each contribute to the Zn(2+) site. Substrate is bound by residues 15–17 (HFR) and asparagine 41. Zn(2+)-binding residues include lysine 98, histidine 135, and histidine 173. Lysine 98 is subject to N6-carboxylysine. Residue histidine 135 participates in substrate binding. Leucine 218 is a substrate binding site. Aspartate 246 lines the Zn(2+) pocket. Aspartate 246 is an active-site residue. Substrate-binding residues include histidine 250 and alanine 262.

Belongs to the metallo-dependent hydrolases superfamily. DHOase family. Class II DHOase subfamily. As to quaternary structure, homodimer. The cofactor is Zn(2+).

It catalyses the reaction (S)-dihydroorotate + H2O = N-carbamoyl-L-aspartate + H(+). Its pathway is pyrimidine metabolism; UMP biosynthesis via de novo pathway; (S)-dihydroorotate from bicarbonate: step 3/3. Functionally, catalyzes the reversible cyclization of carbamoyl aspartate to dihydroorotate. This is Dihydroorotase from Shewanella frigidimarina (strain NCIMB 400).